The sequence spans 70 residues: DNA gyrase inhibitor YacG (70 aa).

Zn(2+)-binding residues include cysteine 20, cysteine 23, cysteine 35, and cysteine 39.

Belongs to the DNA gyrase inhibitor YacG family. Interacts with GyrB. Zn(2+) is required as a cofactor.

Functionally, inhibits all the catalytic activities of DNA gyrase by preventing its interaction with DNA. Acts by binding directly to the C-terminal domain of GyrB, which probably disrupts DNA binding by the gyrase. In Rhizobium etli (strain CIAT 652), this protein is DNA gyrase inhibitor YacG.